Consider the following 117-residue polypeptide: Fluoride-specific ion channel FluC 2 (117 aa).

2 consecutive transmembrane segments (helical) span residues 1 to 21 (MISI…RSAI) and 46 to 66 (FLIG…AFFV). Na(+) is bound by residues Gly-71 and Thr-74. A helical transmembrane segment spans residues 95 to 115 (LFLNYSLLQFIIGFIACYIGY).

It belongs to the fluoride channel Fluc/FEX (TC 1.A.43) family.

It is found in the cell membrane. It catalyses the reaction fluoride(in) = fluoride(out). Its activity is regulated as follows. Na(+) is not transported, but it plays an essential structural role and its presence is essential for fluoride channel function. Its function is as follows. Fluoride-specific ion channel. Important for reducing fluoride concentration in the cell, thus reducing its toxicity. This is Fluoride-specific ion channel FluC 2 from Staphylococcus aureus (strain MRSA252).